The following is a 335-amino-acid chain: Ornithine carbamoyltransferase (335 aa).

Residues 57–60 (STRT), Arg-108, and 135–138 (HPTQ) contribute to the carbamoyl phosphate site. L-ornithine is bound by residues Asn-168, Asp-232, and 236–237 (SM). Carbamoyl phosphate-binding positions include 274–275 (CL) and Arg-319.

The protein belongs to the aspartate/ornithine carbamoyltransferase superfamily. OTCase family.

It localises to the cytoplasm. It catalyses the reaction carbamoyl phosphate + L-ornithine = L-citrulline + phosphate + H(+). The protein operates within amino-acid degradation; L-arginine degradation via ADI pathway; carbamoyl phosphate from L-arginine: step 2/2. Its function is as follows. Reversibly catalyzes the transfer of the carbamoyl group from carbamoyl phosphate (CP) to the N(epsilon) atom of ornithine (ORN) to produce L-citrulline. This chain is Ornithine carbamoyltransferase, found in Limosilactobacillus reuteri (strain DSM 20016) (Lactobacillus reuteri).